We begin with the raw amino-acid sequence, 477 residues long: UDP-N-acetylmuramate--L-alanine ligase (477 aa).

ATP is bound at residue Gly-125–Thr-131.

This sequence belongs to the MurCDEF family.

It localises to the cytoplasm. The catalysed reaction is UDP-N-acetyl-alpha-D-muramate + L-alanine + ATP = UDP-N-acetyl-alpha-D-muramoyl-L-alanine + ADP + phosphate + H(+). Its pathway is cell wall biogenesis; peptidoglycan biosynthesis. Functionally, cell wall formation. This is UDP-N-acetylmuramate--L-alanine ligase from Acidothermus cellulolyticus (strain ATCC 43068 / DSM 8971 / 11B).